The primary structure comprises 512 residues: 2,3-bisphosphoglycerate-independent phosphoglycerate mutase (512 aa).

2 residues coordinate Mn(2+): Asp12 and Ser62. Ser62 acts as the Phosphoserine intermediate in catalysis. Substrate is bound by residues His123, 154–155, Arg181, Arg187, 253–256, and Lys336; these read RD and RPDR. The Mn(2+) site is built by Asp403, His407, Asp444, His445, and His462.

The protein belongs to the BPG-independent phosphoglycerate mutase family. In terms of assembly, monomer. Mn(2+) is required as a cofactor.

The enzyme catalyses (2R)-2-phosphoglycerate = (2R)-3-phosphoglycerate. Its pathway is carbohydrate degradation; glycolysis; pyruvate from D-glyceraldehyde 3-phosphate: step 3/5. In terms of biological role, catalyzes the interconversion of 2-phosphoglycerate and 3-phosphoglycerate. In Aster yellows witches'-broom phytoplasma (strain AYWB), this protein is 2,3-bisphosphoglycerate-independent phosphoglycerate mutase.